A 503-amino-acid chain; its full sequence is Basic immunoglobulin-like variable motif-containing protein (503 aa).

Basic and acidic residues predominate over residues 1-26; that stretch reads MPNVAETERSNDSGNGEHKSERKSPE. Disordered regions lie at residues 1–33, 152–184, and 438–469; these read MPNV…QGAV, TTNS…ECPQ, and ESQP…GRSF. Basic residues predominate over residues 155–172; that stretch reads SKHKSGNAKKQVSKRKTS. Residues 173–184 are compositionally biased toward basic and acidic residues; that stretch reads DKKGRYQKECPQ.

The protein belongs to the BIVM family. As to expression, widely expressed. Expressed at higher level in spleen, ovary, small intestine, colon, peripheral blood leukocytes and liver. Also expressed in testis, ovary, aorta, appendix, trachea, pituitary gland, bladder, uterus, spinal cord, salivary gland, stomach, mammary gland and bone marrow. Weakly or not expressed in fetal spleen, adult thymus and certain cancer cell lines.

The protein resides in the cytoplasm. It is found in the nucleus. The protein is Basic immunoglobulin-like variable motif-containing protein (BIVM) of Homo sapiens (Human).